Consider the following 715-residue polypeptide: Polyribonucleotide nucleotidyltransferase (715 aa).

Mg(2+) contacts are provided by aspartate 498 and aspartate 504. One can recognise a KH domain in the interval proline 565–isoleucine 625. The S1 motif domain occupies glycine 635–leucine 706.

The protein belongs to the polyribonucleotide nucleotidyltransferase family. The cofactor is Mg(2+).

The protein localises to the cytoplasm. The enzyme catalyses RNA(n+1) + phosphate = RNA(n) + a ribonucleoside 5'-diphosphate. Its function is as follows. Involved in mRNA degradation. Catalyzes the phosphorolysis of single-stranded polyribonucleotides processively in the 3'- to 5'-direction. The polypeptide is Polyribonucleotide nucleotidyltransferase (Onion yellows phytoplasma (strain OY-M)).